The primary structure comprises 340 residues: Phosphate acyltransferase (340 aa).

Belongs to the PlsX family. As to quaternary structure, homodimer. Probably interacts with PlsY.

It is found in the cytoplasm. The catalysed reaction is a fatty acyl-[ACP] + phosphate = an acyl phosphate + holo-[ACP]. It participates in lipid metabolism; phospholipid metabolism. Catalyzes the reversible formation of acyl-phosphate (acyl-PO(4)) from acyl-[acyl-carrier-protein] (acyl-ACP). This enzyme utilizes acyl-ACP as fatty acyl donor, but not acyl-CoA. This chain is Phosphate acyltransferase, found in Marinobacter nauticus (strain ATCC 700491 / DSM 11845 / VT8) (Marinobacter aquaeolei).